A 340-amino-acid polypeptide reads, in one-letter code: Mitochondrial calcium uniporter regulator 1 (340 aa).

Residues 1–44 (MDSGSVAAERPRRTPSRQRLPSSGCGVPARPGVSTLPGGRSWLR) form a disordered region. Residues 1–54 (MDSGSVAAERPRRTPSRQRLPSSGCGVPARPGVSTLPGGRSWLRPRGRAARASP) are Mitochondrial intermembrane-facing. Residues 55-74 (LLFLLLVPSPRLAATATATA) traverse the membrane as a helical segment. Over 75 to 316 (PRRTLAERSR…KTMLEAHKLD (242 aa)) the chain is Mitochondrial matrix. The stretch at 197–291 (ALQQVLSKIA…VSLHAQQDRA (95 aa)) forms a coiled coil. Residue Lys-204 is modified to N6-acetyllysine. The helical transmembrane segment at 317–339 (TIKYLAGSVFTCLTVALGFYRLW) threads the bilayer. Position 340 (Ile-340) is a topological domain, mitochondrial intermembrane.

This sequence belongs to the CCDC90 family. Interacts (via coiled coil regions) with MCU; the interaction is direct. Interacts with SMDT1/EMRE; the interaction is direct. Interacts with PPIF.

It is found in the mitochondrion inner membrane. Key regulator of mitochondrial calcium uniporter (MCU) required for calcium entry into mitochondrion. Plays a direct role in uniporter-mediated calcium uptake via a direct interaction with MCU. Probably involved in the assembly of the membrane components of the uniporter complex (uniplex). The polypeptide is Mitochondrial calcium uniporter regulator 1 (Mus musculus (Mouse)).